The primary structure comprises 413 residues: Serine--tRNA ligase (413 aa).

221-223 (TAE) provides a ligand contact to L-serine. 252–254 (RRE) is an ATP binding site. Glu-275 is a binding site for L-serine. Residue 339–342 (EVSS) coordinates ATP. Ser-375 is an L-serine binding site.

It belongs to the class-II aminoacyl-tRNA synthetase family. Type-1 seryl-tRNA synthetase subfamily. In terms of assembly, homodimer. The tRNA molecule binds across the dimer.

It is found in the cytoplasm. The catalysed reaction is tRNA(Ser) + L-serine + ATP = L-seryl-tRNA(Ser) + AMP + diphosphate + H(+). It carries out the reaction tRNA(Sec) + L-serine + ATP = L-seryl-tRNA(Sec) + AMP + diphosphate + H(+). Its pathway is aminoacyl-tRNA biosynthesis; selenocysteinyl-tRNA(Sec) biosynthesis; L-seryl-tRNA(Sec) from L-serine and tRNA(Sec): step 1/1. In terms of biological role, catalyzes the attachment of serine to tRNA(Ser). Is also able to aminoacylate tRNA(Sec) with serine, to form the misacylated tRNA L-seryl-tRNA(Sec), which will be further converted into selenocysteinyl-tRNA(Sec). This Dehalococcoides mccartyi (strain ATCC BAA-2100 / JCM 16839 / KCTC 5957 / BAV1) protein is Serine--tRNA ligase.